The sequence spans 464 residues: DNA primase DnaG (464 aa).

The region spanning 200-274 (DSIIVVEGRA…DVDYVARAPE (75 aa)) is the Toprim domain. Glutamate 206, aspartate 248, and aspartate 250 together coordinate Mg(2+). Basic and acidic residues predominate over residues 322–332 (NGREEKVREVK). The interval 322–359 (NGREEKVREVKPPAPAPAPAPAPKPIEKPEPKEREEKI) is disordered. Over residues 333–345 (PPAPAPAPAPAPK) the composition is skewed to pro residues. The span at 346-359 (PIEKPEPKEREEKI) shows a compositional bias: basic and acidic residues.

The protein belongs to the archaeal DnaG primase family. In terms of assembly, forms a ternary complex with MCM helicase and DNA. Component of the archaeal exosome complex. Mg(2+) serves as cofactor.

It carries out the reaction ssDNA + n NTP = ssDNA/pppN(pN)n-1 hybrid + (n-1) diphosphate.. In terms of biological role, RNA polymerase that catalyzes the synthesis of short RNA molecules used as primers for DNA polymerase during DNA replication. Also part of the exosome, which is a complex involved in RNA degradation. Acts as a poly(A)-binding protein that enhances the interaction between heteromeric, adenine-rich transcripts and the exosome. This is DNA primase DnaG from Thermococcus onnurineus (strain NA1).